A 557-amino-acid polypeptide reads, in one-letter code: NADH-quinone oxidoreductase subunit C/D (557 aa).

Residues 1-13 are compositionally biased toward acidic residues; sequence MSLEEQQSDDPAE. Residues 1 to 20 form a disordered region; the sequence is MSLEEQQSDDPAELESGVSR. Residues 1–174 are NADH dehydrogenase I subunit C; the sequence is MSLEEQQSDD…ATLREHANPL (174 aa). The NADH dehydrogenase I subunit D stretch occupies residues 184–557; that stretch reads NTMYINIGPH…LDIVLGEVDR (374 aa). A Glycyl lysine isopeptide (Lys-Gly) (interchain with G-Cter in SAMP2) cross-link involves residue Lys517.

It in the N-terminal section; belongs to the complex I 30 kDa subunit family. The protein in the C-terminal section; belongs to the complex I 49 kDa subunit family. NDH-1 is composed of 13 different subunits. Subunits NuoB, CD, E, F, and G constitute the peripheral sector of the complex.

The protein localises to the cell membrane. It catalyses the reaction a quinone + NADH + 5 H(+)(in) = a quinol + NAD(+) + 4 H(+)(out). In terms of biological role, NDH-1 shuttles electrons from NADH, via FMN and iron-sulfur (Fe-S) centers, to quinones in the respiratory chain. Couples the redox reaction to proton translocation (for every two electrons transferred, four hydrogen ions are translocated across the cytoplasmic membrane), and thus conserves the redox energy in a proton gradient. The chain is NADH-quinone oxidoreductase subunit C/D (nuoCD) from Haloferax volcanii (strain ATCC 29605 / DSM 3757 / JCM 8879 / NBRC 14742 / NCIMB 2012 / VKM B-1768 / DS2) (Halobacterium volcanii).